A 281-amino-acid chain; its full sequence is MTSPSSRSVRPGSVVRTVRRHRGGRSATVQDMVAAEMPVAFIYNGVPFAVMMATPEDLEDFALGFSLSEGIVDHAQDLRVIAVETFLEGASLQIEIPPERAAALDQRRRNLDGRSGCGVCGNESIEAVLRVPPVLHSSLQIDVDALAHALDALHARQPIAAQTGAVHAAAWADAQGNVQLVREDVGRHNALDKLIGALARARIDASHGFAVVTSRASYEMAMKAAQARIPLLAAISAPTALAISLAESAGLTLIGFARDHDCVVYSHPQRLDLGVAVGEPA.

The active-site Cysteine persulfide intermediate is C117.

This sequence belongs to the FdhD family.

It is found in the cytoplasm. In terms of biological role, required for formate dehydrogenase (FDH) activity. Acts as a sulfur carrier protein that transfers sulfur from IscS to the molybdenum cofactor prior to its insertion into FDH. The chain is Sulfur carrier protein FdhD from Xanthomonas euvesicatoria pv. vesicatoria (strain 85-10) (Xanthomonas campestris pv. vesicatoria).